The sequence spans 327 residues: MQHLEEIIASASTAIEAAESLVALDEVRVQYLGKKGELTAQLQSLGKLPPEERREAGQEINKAKGVVQQAIAARKDALQSAELEAKLAAETIDVTLPGRRIENGGLHPVTRTVERIEKFFGELGFNTEAGPEIEDAFHNFDALNIAADHPARTDHDTFFFNPDLMLRTHTSGVQIRTMENGKPPFRFIAPGRVYRNDYDQTHTPMFHQVEGMLVDENVNFAQLKGILHDFLCNFFEEEVEVRFRPSYFPFTEPSAEVDVKGKNGKWLEVLGCGMVHPNVLRSVGIDPEKYSGFAFGMGVERLTMLRYGVNDLRAFFENDLRFLKQFK.

Glutamate 252 is a Mg(2+) binding site.

Belongs to the class-II aminoacyl-tRNA synthetase family. Phe-tRNA synthetase alpha subunit type 1 subfamily. Tetramer of two alpha and two beta subunits. Mg(2+) serves as cofactor.

It localises to the cytoplasm. It catalyses the reaction tRNA(Phe) + L-phenylalanine + ATP = L-phenylalanyl-tRNA(Phe) + AMP + diphosphate + H(+). This is Phenylalanine--tRNA ligase alpha subunit from Vibrio parahaemolyticus serotype O3:K6 (strain RIMD 2210633).